The primary structure comprises 358 residues: MSAYCGKYKDELIKNAAYIGTPGKGILAADESTGTIGKRFASINVENVEDNRRAFRELLFCTPGALQYISGVILFDETLYQKTKDGKPFVDVLKEAGALPGIKVDKGTIEVAGTDKETTTQGHDDLGKQCAKYYEAGARFAKWRAVLKIGPNQPSQLAIDLNAQGLACYAIICQENGLVPIVEPEILVDGPHDIDRCAYVSEVVLAACYKALNEHHVLLEGTLLKPNMVTPGSDAKKVAPEVIAEYTVRTLQRTVPPAVPAIVFLSGGQSEEEATLNLNAMNKLSAKKPWSLSFSFGRALQQSTLKAWAGKTENVEKARAAFLVRCKANSEATLGTYKGDAVLGEGAAESLHVKDYKY.

Arg-39 lines the substrate pocket. Glu-183 (proton acceptor) is an active-site residue. The Schiff-base intermediate with dihydroxyacetone-P role is filled by Lys-225. Substrate-binding positions include Ser-266–Gly-268 and Arg-298.

It belongs to the class I fructose-bisphosphate aldolase family. In terms of assembly, homotetramer.

It localises to the cytoplasm. It is found in the cytosol. It carries out the reaction beta-D-fructose 1,6-bisphosphate = D-glyceraldehyde 3-phosphate + dihydroxyacetone phosphate. It functions in the pathway carbohydrate degradation; glycolysis; D-glyceraldehyde 3-phosphate and glycerone phosphate from D-glucose: step 4/4. Its function is as follows. Fructose-bisphosphate aldolase that plays a key role in glycolysis and gluconeogenesis. The polypeptide is Fructose-bisphosphate aldolase 2, cytoplasmic (Oryza sativa subsp. japonica (Rice)).